A 732-amino-acid polypeptide reads, in one-letter code: Lanosterol synthase (732 aa).

Residue threonine 2 is modified to N-acetylthreonine. PFTB repeat units follow at residues 77–121 (ALNG…PLPA), 124–165 (REEI…RILG), 424–468 (PDNP…LLLQ), 483–528 (LCDA…MIDY), 560–600 (LTQG…ACMG), 612–653 (VSRA…HNTC), and 670–712 (QERG…NIFP). Aspartate 455 acts as the Proton donor in catalysis.

It belongs to the terpene cyclase/mutase family. As to quaternary structure, monomer. In terms of tissue distribution, widely expressed. Expressed in the hair bulb, the outer root sheath and hair matrix of the hair follicle epithelium. Also detected in dermal papilla, epidermis, sweat glands, sebaceous glands, and blood vessels.

It is found in the endoplasmic reticulum membrane. The enzyme catalyses (S)-2,3-epoxysqualene = lanosterol. It participates in terpene metabolism; lanosterol biosynthesis; lanosterol from farnesyl diphosphate: step 3/3. Its function is as follows. Key enzyme in the cholesterol biosynthesis pathway. Catalyzes the cyclization of (S)-2,3 oxidosqualene to lanosterol, a reaction that forms the sterol nucleus. Through the production of lanosterol may regulate lens protein aggregation and increase transparency. This Homo sapiens (Human) protein is Lanosterol synthase (LSS).